The primary structure comprises 320 residues: Zygote arrest protein 1 (320 aa).

Disordered regions lie at residues 106–130 and 155–208; these read ELRR…EVRY and DRPA…AEGS. Residues 222-305 form a 3CxxC-type zinc finger; the sequence is KYGYYHCREC…RQDLCGRCKG (84 aa).

Belongs to the ZAR1 family.

The protein resides in the cytoplasm. It localises to the cytoplasmic ribonucleoprotein granule. MRNA-binding protein required for maternal mRNA storage, translation and degradation during oocyte maturation. Probably promotes formation of some phase-separated membraneless compartment that stores maternal mRNAs in oocytes: acts by undergoing liquid-liquid phase separation upon binding to maternal mRNAs. Binds to the 3'-UTR of maternal mRNAs, inhibiting their translation. In Takifugu rubripes (Japanese pufferfish), this protein is Zygote arrest protein 1.